The chain runs to 215 residues: Cytochrome b6 (215 aa).

A helical transmembrane segment spans residues 32-52 (IFYCLGGIVFVSFLIQVATGF). Cysteine 35 provides a ligand contact to heme c. Histidine 86 and histidine 100 together coordinate heme b. A run of 3 helical transmembrane segments spans residues 90–110 (VSMM…TGGF), 116–136 (LTWV…VTGY), and 186–206 (LHTF…FLMI). Positions 187 and 202 each coordinate heme b.

The protein belongs to the cytochrome b family. PetB subfamily. In terms of assembly, the 4 large subunits of the cytochrome b6-f complex are cytochrome b6, subunit IV (17 kDa polypeptide, PetD), cytochrome f and the Rieske protein, while the 4 small subunits are PetG, PetL, PetM and PetN. The complex functions as a dimer. Heme b is required as a cofactor. The cofactor is heme c.

The protein localises to the plastid. It localises to the chloroplast thylakoid membrane. Its function is as follows. Component of the cytochrome b6-f complex, which mediates electron transfer between photosystem II (PSII) and photosystem I (PSI), cyclic electron flow around PSI, and state transitions. This chain is Cytochrome b6, found in Pyropia yezoensis (Susabi-nori).